The chain runs to 906 residues: Catenin alpha-1 (906 aa).

Threonine 2 is modified (N-acetylthreonine). Positions 2-228 are involved in homodimerization; sequence TAVHTGNINF…PILYTASQAC (227 aa). A Glycyl lysine isopeptide (Lys-Gly) (interchain with G-Cter in SUMO2) cross-link involves residue lysine 57. Residues 97 to 148 form an interaction with JUP and CTNNB1 region; it reads VRKQCDLMKSAAGEFADDPCSSVKRGNMVRAARALLSAVTRLLILADMADVY. Phosphoserine is present on residues serine 264, serine 268, serine 295, and serine 297. The tract at residues 325–394 is interaction with alpha-actinin; it reads TRDDRRERIV…AVMDHVSDSF (70 aa). Threonine 634 bears the Phosphothreonine mark. Residue serine 641 is modified to Phosphoserine. Threonine 645 carries the phosphothreonine modification. Serine 652 and serine 655 each carry phosphoserine. Threonine 658 is subject to Phosphothreonine. Lysine 797 is covalently cross-linked (Glycyl lysine isopeptide (Lys-Gly) (interchain with G-Cter in SUMO2)). Position 851 is a phosphoserine (serine 851). Residues 864–880 show a composition bias toward basic and acidic residues; it reads PEKKPLVKREKQDETQT. The disordered stretch occupies residues 864-894; the sequence is PEKKPLVKREKQDETQTKIKRASQKKHVNPV. A compositionally biased stretch (basic residues) spans 881–891; sequence KIKRASQKKHV.

This sequence belongs to the vinculin/alpha-catenin family. Monomer and homodimer; the monomer preferentially binds to CTNNB1 and the homodimer to actin. Component of an cadherin:catenin adhesion complex composed of at least of CDH26, beta-catenin/CTNNB1, alpha-catenin/CTNNA1 and p120 catenin/CTNND1. Possible component of an E-cadherin/ catenin adhesion complex together with E-cadherin/CDH1 and beta-catenin/CTNNB1 or gamma-catenin/JUP; the complex is located to adherens junctions. The stable association of CTNNA1 is controversial as CTNNA1 was shown not to bind to F-actin when assembled in the complex. Alternatively, the CTNNA1-containing complex may be linked to F-actin by other proteins such as LIMA1. Binds AFDN and F-actin. Interacts with ARHGAP21. Interacts with AJUBA. Interacts with LIMA1. Interacts with vinculin/VCL. Interacts with TJP2/ZO2 (via N-terminus). Interacts with TJP1/ZO1 (via N-terminus). Sumoylated. Post-translationally, phosphorylation seems to contribute to the strength of cell-cell adhesion rather than to the basic capacity for cell-cell adhesion.

The protein localises to the cytoplasm. The protein resides in the cytoskeleton. Its subcellular location is the cell junction. It is found in the adherens junction. It localises to the cell membrane. The protein localises to the nucleus. Functionally, associates with the cytoplasmic domain of a variety of cadherins. The association of catenins to cadherins produces a complex which is linked to the actin filament network, and which seems to be of primary importance for cadherins cell-adhesion properties. Can associate with both E- and N-cadherins. Originally believed to be a stable component of E-cadherin/catenin adhesion complexes and to mediate the linkage of cadherins to the actin cytoskeleton at adherens junctions. In contrast, cortical actin was found to be much more dynamic than E-cadherin/catenin complexes and CTNNA1 was shown not to bind to F-actin when assembled in the complex suggesting a different linkage between actin and adherens junctions components. The homodimeric form may regulate actin filament assembly and inhibit actin branching by competing with the Arp2/3 complex for binding to actin filaments. Involved in the regulation of WWTR1/TAZ, YAP1 and TGFB1-dependent SMAD2 and SMAD3 nuclear accumulation. May play a crucial role in cell differentiation. The chain is Catenin alpha-1 from Bos taurus (Bovine).